A 640-amino-acid chain; its full sequence is Asparagine synthetase domain-containing protein 1 (640 aa).

C2 functions as the For GATase activity in the catalytic mechanism. Residues 2-184 (CGICCAVSFS…ASGIFRIDLK (183 aa)) enclose the Glutamine amidotransferase type-2 domain. An Asparagine synthetase domain is found at 286 to 602 (QFIGVLSTAV…GLTASALLPK (317 aa)).

The protein is Asparagine synthetase domain-containing protein 1 (ASNSD1) of Bos taurus (Bovine).